Consider the following 176-residue polypeptide: Large ribosomal subunit protein uL10 (176 aa).

The protein belongs to the universal ribosomal protein uL10 family. In terms of assembly, part of the ribosomal stalk of the 50S ribosomal subunit. The N-terminus interacts with L11 and the large rRNA to form the base of the stalk. The C-terminus forms an elongated spine to which L12 dimers bind in a sequential fashion forming a multimeric L10(L12)X complex.

Functionally, forms part of the ribosomal stalk, playing a central role in the interaction of the ribosome with GTP-bound translation factors. The polypeptide is Large ribosomal subunit protein uL10 (Alcanivorax borkumensis (strain ATCC 700651 / DSM 11573 / NCIMB 13689 / SK2)).